Here is a 388-residue protein sequence, read N- to C-terminus: Chorismate synthase (388 aa).

Arginine 39 and arginine 45 together coordinate NADP(+). The segment at glutamate 95–lysine 118 is disordered. Residues arginine 130–serine 132, asparagine 251–alanine 252, glycine 296, lysine 311–threonine 315, and arginine 337 contribute to the FMN site.

This sequence belongs to the chorismate synthase family. In terms of assembly, homotetramer. FMNH2 serves as cofactor.

The enzyme catalyses 5-O-(1-carboxyvinyl)-3-phosphoshikimate = chorismate + phosphate. It participates in metabolic intermediate biosynthesis; chorismate biosynthesis; chorismate from D-erythrose 4-phosphate and phosphoenolpyruvate: step 7/7. Its function is as follows. Catalyzes the anti-1,4-elimination of the C-3 phosphate and the C-6 proR hydrogen from 5-enolpyruvylshikimate-3-phosphate (EPSP) to yield chorismate, which is the branch point compound that serves as the starting substrate for the three terminal pathways of aromatic amino acid biosynthesis. This reaction introduces a second double bond into the aromatic ring system. The sequence is that of Chorismate synthase from Listeria innocua serovar 6a (strain ATCC BAA-680 / CLIP 11262).